A 186-amino-acid polypeptide reads, in one-letter code: piRNA-mediated silencing protein C19orf84 (186 aa).

2 disordered regions span residues 1-42 and 89-186; these read MEQP…NSTD and SQAG…ETEY. Positions 13–22 are enriched in polar residues; sequence NNLSLPSSGT. The segment covering 24–36 has biased composition (pro residues); that stretch reads PWPPAPLPAPPPL. The span at 114-126 shows a compositional bias: basic residues; it reads RPGWGRGLHRRGL. Pro residues predominate over residues 145–157; it reads RTPPMTLPSPPTL.

As to quaternary structure, interacts with SPOCD1.

The protein resides in the nucleus. It localises to the nucleoplasm. Functionally, protein adapter involved in piRNA-directed transposon methylation by connecting PIWIL4-piRNA and DNA methylation machineries. The PIWIL4-piRNA pathway plays a central role during spermatogenesis by directing transposon DNA methylation and silencing, thereby preventing their mobilization, which is essential for the germline integrity. This is piRNA-mediated silencing protein C19orf84 from Homo sapiens (Human).